The chain runs to 134 residues: Aspartate 1-decarboxylase (134 aa).

The Schiff-base intermediate with substrate; via pyruvic acid role is filled by S25. S25 bears the Pyruvic acid (Ser) mark. Residue T57 coordinates substrate. Catalysis depends on Y58, which acts as the Proton donor. 73-75 serves as a coordination point for substrate; it reads GAA.

Belongs to the PanD family. In terms of assembly, heterooctamer of four alpha and four beta subunits. Pyruvate serves as cofactor. Is synthesized initially as an inactive proenzyme, which is activated by self-cleavage at a specific serine bond to produce a beta-subunit with a hydroxyl group at its C-terminus and an alpha-subunit with a pyruvoyl group at its N-terminus.

It localises to the cytoplasm. The enzyme catalyses L-aspartate + H(+) = beta-alanine + CO2. Its pathway is cofactor biosynthesis; (R)-pantothenate biosynthesis; beta-alanine from L-aspartate: step 1/1. Functionally, catalyzes the pyruvoyl-dependent decarboxylation of aspartate to produce beta-alanine. This Sulfurihydrogenibium sp. (strain YO3AOP1) protein is Aspartate 1-decarboxylase.